A 1675-amino-acid chain; its full sequence is Coadhesin (1675 aa).

At 1 to 1356 (QGNYYSYGGT…TIADQADAAK (1356 aa)) the chain is on the extracellular side. The F5/8 type C 1 domain maps to 11–160 (TPGTPIGCTN…ICMRVGVESC (150 aa)). 7 consecutive TSP type-1 domains span residues 168–220 (NGAW…NDCV), 224–279 (NGGW…QFCP), 281–336 (DGGW…QCCP), 338–393 (HGGW…QTCP), 403–458 (NGNY…IPCP), 460–515 (NGNW…TACP), and 517–572 (DGGW…GPCP). Disulfide bonds link Cys-180–Cys-216, Cys-184–Cys-219, Cys-194–Cys-206, Cys-236–Cys-273, Cys-240–Cys-278, Cys-251–Cys-263, Cys-293–Cys-330, Cys-297–Cys-335, Cys-308–Cys-320, Cys-350–Cys-387, Cys-354–Cys-392, Cys-365–Cys-377, Cys-415–Cys-452, Cys-419–Cys-457, Cys-430–Cys-442, Cys-472–Cys-509, Cys-476–Cys-514, Cys-487–Cys-499, Cys-528–Cys-566, Cys-532–Cys-571, and Cys-543–Cys-555. Residues 567–588 (NKGPCPTSPPTISPPTTGSPAD) form a disordered region. VWFA domains follow at residues 595 to 769 (DLVF…MDRI), 778 to 958 (DIGF…FKAL), and 966 to 1141 (DLTF…ISII). One can recognise a TSP type-1 8 domain in the interval 1144–1198 (PSGLSKWSSWSACSKTCRYLGKAGTQIRTRDCKIPELGCDGMRIDTVECNKMDCE). Disulfide bonds link Cys-1156/Cys-1192, Cys-1160/Cys-1197, and Cys-1175/Cys-1182. In terms of domain architecture, F5/8 type C 2 spans 1192–1336 (CNKMDCEGCG…PCMQAAVFGC (145 aa)). A helical membrane pass occupies residues 1357-1377 (GILIVLWILAGILTFLLLMAC). Residues 1378 to 1675 (CYYCCWHVCC…RGEEWYSRWG (298 aa)) lie on the Cytoplasmic side of the membrane. Basic and acidic residues predominate over residues 1463-1480 (EKHVTAEDVKSEKPKYSE). Residues 1463–1491 (EKHVTAEDVKSEKPKYSEEASSGTIKSGS) are disordered. The span at 1481–1491 (EASSGTIKSGS) shows a compositional bias: polar residues.

As to expression, component of the acid-insoluble and acid-soluble organic matrix of the aragonitic skeleton (at protein level).

It localises to the membrane. This Acropora millepora (Staghorn coral) protein is Coadhesin.